The following is an 868-amino-acid chain: Programmed cell death 6-interacting protein (868 aa).

Alanine 2 is subject to N-acetylalanine. A BRO1 domain is found at 3–392 (TFISVQLKKT…AQMREATTLA (390 aa)). An interaction with CHMP4A, CHMP4B and CHMP4C region spans residues 176–503 (TVDISPDTVG…NFRTVLDKAV (328 aa)). The interval 176 to 868 (TVDISPDTVG…PPQQSYYPQQ (693 aa)) is interaction with EIAV p9. N6-acetyllysine is present on lysine 215. The interaction with SDCBP stretch occupies residues 418-868 (LTKSRSVIEQ…PPQQSYYPQQ (451 aa)). At threonine 479 the chain carries Phosphothreonine. Serine 481 is subject to Phosphoserine. The self-association stretch occupies residues 503-868 (VQADGQVKEC…PPQQSYYPQQ (366 aa)). Disordered regions lie at residues 713-809 (IARE…YPGY) and 832-868 (PYPPVYHQSPGQAPYPGPQQPSYPFPQPPQQSYYPQQ). The segment at 717-720 (PSAP) is interaction with TSG101. A Phosphoserine modification is found at serine 730. The segment covering 737-763 (PTPPTPAPRTMPPTKPQPPARPPPPVL) has biased composition (pro residues). Phosphothreonine is present on residues threonine 738 and threonine 741. Arginine 745 carries the post-translational modification Omega-N-methylarginine. Over residues 778-791 (GAGTAAPAPSQTPG) the composition is skewed to low complexity. Composition is skewed to pro residues over residues 792-807 (SAPPPQAQGPPYPTYP) and 844-860 (APYPGPQQPSYPFPQPP). The tract at residues 801 to 806 (PPYPTY) is interaction with CEP55. Residues 864–868 (YYPQQ) are essential to promote virus budding.

As to quaternary structure, self-associates. Interacts with SH3KBP1/CIN85. Interacts with PDCD6 in a calcium -dependent manner. Interacts with TSG101 in a calcium-dependent manner; PDCD6IP homooligomerization may be required for TSG101-binding. Interacts with SGSM3. Directly interacts with CHMP4A, CHMP4B and CHMP4C. Directly interacts with CEP55 in a 1:2 stoechiometry. The interaction with CEP55 is required for PDCD6IP targeting to the midbody. May interact with PDGFRB. Interacts with SH3GL1 and SH3GL2/endophilin-1. Forms a complex with SDCBP and SDC2. Found in a complex with F-actin, TJP1/ZO-1 and PARD3. Interacts with CD2AP. Interacts with ARRDC1. Interacts (via BRO1 domain) with the ATG12-ATG3 conjugate; this interaction is bridged by ATG12 and promotes multiple PDCD6IP-mediated functions such as endolysosomal trafficking, macroautophagy and exosome biogenesis. In terms of assembly, (Microbial infection) Interacts with HIV-1 p6. Interacts with HIV-1 p9. (Microbial infection) Interacts with EIAV p9. As to quaternary structure, (Microbial infection) Interacts with Murine leukemia virus Gag polyprotein (via LYPX(n)L motif). In terms of assembly, (Microbial infection) Interacts with ebola virus protein VP40 (via YPx(n)L/I motif). Post-translationally, may be phosphorylated on tyrosine residues by activated PDGFRB.

It is found in the cytoplasm. Its subcellular location is the cytosol. The protein resides in the melanosome. It localises to the cytoskeleton. The protein localises to the microtubule organizing center. It is found in the centrosome. Its subcellular location is the secreted. The protein resides in the extracellular exosome. It localises to the cell junction. The protein localises to the tight junction. It is found in the midbody. Its subcellular location is the midbody ring. In terms of biological role, multifunctional protein involved in endocytosis, multivesicular body biogenesis, membrane repair, cytokinesis, apoptosis and maintenance of tight junction integrity. Class E VPS protein involved in concentration and sorting of cargo proteins of the multivesicular body (MVB) for incorporation into intralumenal vesicles (ILVs) that are generated by invagination and scission from the limiting membrane of the endosome. Binds to the phospholipid lysobisphosphatidic acid (LBPA) which is abundant in MVBs internal membranes. The MVB pathway requires the sequential function of ESCRT-O, -I,-II and -III complexes. The ESCRT machinery also functions in topologically equivalent membrane fission events, such as the terminal stages of cytokinesis. Adapter for a subset of ESCRT-III proteins, such as CHMP4, to function at distinct membranes. Required for completion of cytokinesis. May play a role in the regulation of both apoptosis and cell proliferation. Regulates exosome biogenesis in concert with SDC1/4 and SDCBP. By interacting with F-actin, PARD3 and TJP1 secures the proper assembly and positioning of actomyosin-tight junction complex at the apical sides of adjacent epithelial cells that defines a spatial membrane domain essential for the maintenance of epithelial cell polarity and barrier. Functionally, (Microbial infection) Involved in HIV-1 virus budding. Can replace TSG101 it its role of supporting HIV-1 release; this function requires the interaction with CHMP4B. The ESCRT machinery also functions in topologically equivalent membrane fission events, such as enveloped virus budding (HIV-1 and other lentiviruses). This is Programmed cell death 6-interacting protein from Homo sapiens (Human).